A 450-amino-acid polypeptide reads, in one-letter code: 3-phosphoshikimate 1-carboxyvinyltransferase (450 aa).

3-phosphoshikimate-binding residues include Lys-28, Ser-29, and Arg-33. Phosphoenolpyruvate is bound at residue Lys-28. Gly-100 and Arg-128 together coordinate phosphoenolpyruvate. The 3-phosphoshikimate site is built by Ser-173, Gln-175, Asp-326, and Lys-353. Residue Gln-175 participates in phosphoenolpyruvate binding. Residue Asp-326 is the Proton acceptor of the active site. Phosphoenolpyruvate is bound by residues Arg-357 and Arg-402.

The protein belongs to the EPSP synthase family. As to quaternary structure, monomer.

The protein resides in the cytoplasm. The catalysed reaction is 3-phosphoshikimate + phosphoenolpyruvate = 5-O-(1-carboxyvinyl)-3-phosphoshikimate + phosphate. It participates in metabolic intermediate biosynthesis; chorismate biosynthesis; chorismate from D-erythrose 4-phosphate and phosphoenolpyruvate: step 6/7. Catalyzes the transfer of the enolpyruvyl moiety of phosphoenolpyruvate (PEP) to the 5-hydroxyl of shikimate-3-phosphate (S3P) to produce enolpyruvyl shikimate-3-phosphate and inorganic phosphate. The polypeptide is 3-phosphoshikimate 1-carboxyvinyltransferase (Brucella abortus (strain S19)).